We begin with the raw amino-acid sequence, 1121 residues long: Pleckstrin homology domain-containing family A member 7 (1121 aa).

WW domains are found at residues 9 to 42 (DTLP…HPRT) and 54 to 87 (SDLP…HPVT). Positions 105 to 137 (PHMSKQDRNQRPSSMVSETSTAGTASTLEAKPG) are disordered. Positions 115 to 131 (RPSSMVSETSTAGTAST) are enriched in polar residues. Residues 164-282 (PVVVRGWLHK…WVRAMNQAAQ (119 aa)) form the PH domain. The interval 299–514 (QAVPQANHTE…LKMSSEERRA (216 aa)) is disordered. 2 stretches are compositionally biased toward basic and acidic residues: residues 308–356 (ESCH…EGKR) and 437–446 (HWARAQKGDS). Residues 460–475 (PGQSLSFPENYQTLPK) are compositionally biased toward polar residues. Residues 497-514 (YAQDRASHLKMSSEERRA) are compositionally biased toward basic and acidic residues. 6 positions are modified to phosphoserine: Ser-536, Ser-545, Ser-569, Ser-604, Ser-608, and Ser-612. Residues 538-696 (TAPICLGSPE…AESDTDVKLS (159 aa)) are interaction with CTNND1. Positions 547-632 (EFTDQGRSRS…NSSHVDRRSM (86 aa)) are disordered. Residues 567–582 (PPSPSDIPPPGPPRVF) show a composition bias toward pro residues. Basic and acidic residues predominate over residues 589–605 (TPAERVTVKPPDQRRSV). Residues 700 to 801 (EQDRVLQDLE…LQEQHRRAFF (102 aa)) adopt a coiled-coil conformation. Disordered stretches follow at residues 841 to 876 (RKTV…VRTP) and 888 to 971 (YVPY…ELGQ). 3 positions are modified to phosphoserine: Ser-858, Ser-860, and Ser-867. A compositionally biased stretch (pro residues) spans 861 to 871 (KPPPQPSPPTS). A Phosphothreonine modification is found at Thr-870. A phosphoserine mark is found at Ser-871, Ser-903, and Ser-907. Residues 933-942 (DQPPAVPPLP) are compositionally biased toward pro residues. Residues 958–969 (RQSDERKRDREL) are compositionally biased toward basic and acidic residues. Ser-986 carries the post-translational modification Phosphoserine. Disordered regions lie at residues 1003-1028 (GLVG…RLQQ) and 1082-1121 (RHQK…GSVC). Positions 1067 to 1094 (QRGKMSAEEQLERMKRHQKALVRERKRT) form a coiled coil. Positions 1082 to 1094 (RHQKALVRERKRT) are enriched in basic residues.

Interacts with CAMSAP3 and CTNND1. Interacts (via WW domains) with TSPAN33 (via cytoplasmic domain) and with PDZD11; the interaction with TSPAN33 is dependent on PDZD11 being bound to PLEKHA7 and facilitates the docking of ADAM10 to zonula adherens through interaction of TSPAN33 with ADAM10.

It is found in the cell junction. Its subcellular location is the adherens junction. The protein resides in the cytoplasm. It localises to the cytoskeleton. The protein localises to the microtubule organizing center. It is found in the centrosome. Its function is as follows. Required for zonula adherens biogenesis and maintenance. Acts via its interaction with CAMSAP3, which anchors microtubules at their minus-ends to zonula adherens, leading to the recruitment of KIFC3 kinesin to the junctional site. Mediates docking of ADAM10 to zonula adherens through a PDZD11-dependent interaction with the ADAM10-binding protein TSPAN33. In Homo sapiens (Human), this protein is Pleckstrin homology domain-containing family A member 7 (PLEKHA7).